A 290-amino-acid chain; its full sequence is Nucleotide-binding protein BPP4038 (290 aa).

9–16 (GISGSGKS) is a binding site for ATP. Position 58–61 (58–61 (DVRS)) interacts with GTP.

The protein belongs to the RapZ-like family.

Functionally, displays ATPase and GTPase activities. This is Nucleotide-binding protein BPP4038 from Bordetella parapertussis (strain 12822 / ATCC BAA-587 / NCTC 13253).